We begin with the raw amino-acid sequence, 146 residues long: Deoxyuridine 5'-triphosphate nucleotidohydrolase (146 aa).

Substrate contacts are provided by residues 66-68 (RSG), Asn79, 83-85 (TVD), and Lys93.

The protein belongs to the dUTPase family. Mg(2+) serves as cofactor.

It carries out the reaction dUTP + H2O = dUMP + diphosphate + H(+). Its pathway is pyrimidine metabolism; dUMP biosynthesis; dUMP from dCTP (dUTP route): step 2/2. In terms of biological role, this enzyme is involved in nucleotide metabolism: it produces dUMP, the immediate precursor of thymidine nucleotides and it decreases the intracellular concentration of dUTP so that uracil cannot be incorporated into DNA. The protein is Deoxyuridine 5'-triphosphate nucleotidohydrolase of Fusobacterium nucleatum subsp. nucleatum (strain ATCC 25586 / DSM 15643 / BCRC 10681 / CIP 101130 / JCM 8532 / KCTC 2640 / LMG 13131 / VPI 4355).